Reading from the N-terminus, the 336-residue chain is Alpha-N-acetylgalactosaminide alpha-2,6-sialyltransferase 5 (336 aa).

The Cytoplasmic segment spans residues 1–8 (MKTLMRHG). A helical; Signal-anchor for type II membrane protein transmembrane segment spans residues 9-29 (LAVCLALTTMCTSLLLVYSSL). Over 30–336 (GGQKERPPQQ…INHPENKPVF (307 aa)) the chain is Lumenal. The tract at residues 32–81 (QKERPPQQQQQQQQQQQQASATGSSQPAAESSTQQRPGVPAGPRPLDGYL) is disordered. The span at 38–49 (QQQQQQQQQQQQ) shows a compositional bias: low complexity. Positions 50-67 (ASATGSSQPAAESSTQQR) are enriched in polar residues. Cys96 and Cys245 form a disulfide bridge. N-linked (GlcNAc...) asparagine glycans are attached at residues Asn137 and Asn161.

The protein belongs to the glycosyltransferase 29 family.

The protein localises to the golgi apparatus membrane. The enzyme catalyses a ganglioside GM1b (d18:1(4E)) + CMP-N-acetyl-beta-neuraminate = a ganglioside GD1alpha (d18:1(4E)) + CMP + H(+). It catalyses the reaction N-acetyl-alpha-neuraminosyl-(2-&gt;3)-beta-D-galactosyl-(1-&gt;3)-N-acetyl-beta-D-glucosaminyl-(1-&gt;3)-beta-D-galactosyl-(1-&gt;4)-beta-D-glucosyl-(1&lt;-&gt;1')-N-acyl-sphing-4-enine + CMP-N-acetyl-beta-neuraminate = N-acetyl-alpha-neuraminosyl-(2-&gt;3)-beta-D-galactosyl-(1-&gt;3)-[N-acetyl-alpha-neuraminosyl-(2-&gt;6)]-N-acetyl-beta-D-glucosaminyl-(1-&gt;3)-beta-D-galactosyl-(1-&gt;4)-beta-D-glucosyl-(1&lt;-&gt;1')-N-acyl-sphing-4-enine + CMP + H(+). It functions in the pathway glycolipid biosynthesis. Its function is as follows. Predominantly catalyzes the biosynthesis of ganglioside GD1alpha from GM1b in the brain, by transferring the sialyl group (N-acetyl-alpha-neuraminyl or NeuAc) from CMP-NeuAc to the GalNAc residue on the NeuAc-alpha-2,3-Gal-beta-1,3-GalNAc sequence of GM1b. GD1alpha is a critical molecule in the communication and interaction between neuronal cells and their supportive cells, particularly in brain tissues, and functions as an adhesion molecule in the process of metastasis. Also shows activity towards sialyl Lc4Cer (N-acetyl-alpha-neuraminosyl-(2-&gt;3)-beta-D-galactosyl-(1-&gt;3)-N-acetyl-beta-D-glucosaminyl-(1-&gt;3)-beta-D-galactosyl-(1-&gt;4)-beta-D-glucosyl-(1&lt;-&gt;1')-N-acyl-sphing-4-enine) generating disialyl Lc4Cer, which can lead to the synthesis of disialyl Lewis a (Le(a)), suggested to be a cancer-associated antigen. In Homo sapiens (Human), this protein is Alpha-N-acetylgalactosaminide alpha-2,6-sialyltransferase 5 (ST6GALNAC5).